The sequence spans 540 residues: Zinc finger protein 768 (540 aa).

Disordered regions lie at residues 1 to 166 and 239 to 258; these read MERE…FEAQ and TGAL…GQGP. Phosphoserine is present on residues Ser17, Ser18, and Ser23. Tyr27 is modified (phosphotyrosine). Phosphoserine is present on Ser33. The segment covering 34–53 has biased composition (acidic residues); that stretch reads ENEEEEISQQEGSGDYEVEE. 11 positions are modified to phosphoserine: Ser62, Ser69, Ser76, Ser83, Ser90, Ser97, Ser104, Ser107, Ser111, Ser118, and Ser125. Residues 62 to 77 show a composition bias toward low complexity; that stretch reads SPGFEPQSPEFEPQSP. Over residues 107–119 the composition is skewed to polar residues; that stretch reads SDSQSPEFESQSP. Phosphotyrosine is present on Tyr128. Phosphoserine is present on Ser132. Tyr135 carries the post-translational modification Phosphotyrosine. Phosphoserine is present on Ser139. A Phosphotyrosine modification is found at Tyr142. Phosphoserine occurs at positions 144 and 147. Residues 149-166 show a composition bias toward polar residues; it reads YESQNTELKTQSPEFEAQ. A Phosphothreonine modification is found at Thr158. Ser160 is subject to Phosphoserine. Residues 261 to 283 form a C2H2-type 1 zinc finger; the sequence is NICGICGKSFGRGSTLIQHQRIH. Thr284 bears the Phosphothreonine mark. Tyr289 carries the phosphotyrosine modification. 4 C2H2-type zinc fingers span residues 289 to 311, 317 to 339, 345 to 367, and 373 to 395; these read YKCE…QRTH, YKCP…QRTH, and YSCT…QRVH. Phosphoserine is present on residues Ser295 and Ser299. Thr396 carries the phosphothreonine modification. 5 consecutive C2H2-type zinc fingers follow at residues 401 to 423, 429 to 451, 457 to 479, 485 to 507, and 513 to 535; these read FSCG…ARSH, FKCP…ARTH, YSCP…QRSH, YRCA…HRVH, and YKCD…QRTH. Phosphoserine is present on Ser442.

It belongs to the krueppel C2H2-type zinc-finger protein family. As to quaternary structure, interacts (via zinc-finger domains) with TP53 (via N-terminus); interaction might be facilitated by TP53 oligomerization state. Interacts with ELP3. Post-translationally, may be phosphorylated at residue 'Ser-5' of the tandem heptapeptide repeats in the N-terminus. Phosphorylation might be increased upon RAS pathway activation and negatively regulate protein stability.

It is found in the nucleus. The protein localises to the chromosome. Binds to mammalian-wide interspersed repeat (MIRs) sequences in euchromatin and promoter regions of genes at the consensus sequence 5'-GCTGTGTG-[N20]-CCTCTCTG-3', consisting of two anchor regions connected by a linker region; the linker region probably does not contribute to the binding specificity. Required for cell homeostasis. May be involved in transcriptional regulation. In Homo sapiens (Human), this protein is Zinc finger protein 768 (ZNF768).